The primary structure comprises 1954 residues: Chromodomain-helicase-DNA-binding protein 5 (1954 aa).

Disordered stretches follow at residues 1 to 134 (MRGP…PKSS) and 225 to 338 (PLAV…GDGY). 2 stretches are compositionally biased toward acidic residues: residues 17–37 (EEME…EAFD) and 72–90 (NDEL…ESEG). The span at 96 to 115 (NKKKKKKLKDKKEKKAKRKK) shows a compositional bias: basic residues. Pro residues predominate over residues 227-237 (AVSPPQVPQPV). Residues 251 to 272 (GVRKKIKGSKDGKKKGKGKKTA) are compositionally biased toward basic residues. The span at 291-301 (SEEDEREESDF) shows a compositional bias: acidic residues. Over residues 321–330 (KKSKRRRKKK) the composition is skewed to basic residues. 2 PHD-type zinc fingers span residues 343-390 (QDYC…CEKE) and 416-463 (MEFC…CTCP). The segment at 343–653 (QDYCEVCQQG…HRELMLGEDT (311 aa)) is histone-binding. The region spanning 497 to 554 (LPPPKPLEGIPEREFFVKWAGLSYWHCSWVKELQLELYHTVMYRNYQRKNDMDEPPPF) is the Chromo 1 domain. Residues 549–571 (DEPPPFDYGSGDEDGKSEKRKNK) form a disordered region. Over residues 561–571 (EDGKSEKRKNK) the composition is skewed to basic and acidic residues. Residues 592–653 (MMIHRILNHS…HRELMLGEDT (62 aa)) form the Chromo 2 domain. Residues 712 to 896 (RFSWAQGTDT…FHLLNFLTPE (185 aa)) enclose the Helicase ATP-binding domain. Residue 725-732 (DEMGLGKT) participates in ATP binding. The DEAH box signature appears at 847–850 (DEAH). The region spanning 1028 to 1193 (LLQKMLKKLR…MTKQELDDIL (166 aa)) is the Helicase C-terminal domain. Disordered regions lie at residues 1209-1253 (MSQG…EDSS), 1351-1411 (YNDA…LPPL), 1524-1564 (YSTP…APLG), 1597-1640 (AALD…REEV), and 1658-1696 (SRGD…KKED). 2 stretches are compositionally biased toward acidic residues: residues 1355 to 1366 (SQEDQEWQDELS) and 1376 to 1385 (SEDEDEDFEE). Gln1390 carries the N5-methylglutamine modification. Residue Ser1554 is modified to Phosphoserine. Positions 1554 to 1564 (SPAHLLPAPLG) are enriched in low complexity. 2 stretches are compositionally biased toward basic and acidic residues: residues 1600 to 1627 (DRVE…ETEK) and 1658 to 1678 (SRGD…KEPI).

This sequence belongs to the SNF2/RAD54 helicase family. Component of the nucleosome remodeling and deacetylase (NuRD) repressor complex, composed of core proteins MTA1, MTA2, MTA3, RBBP4, RBBP7, HDAC1, HDAC2, MBD2, MBD3, and peripherally associated proteins CDK2AP1, CDK2AP2, GATAD2A, GATAD2B, CHD3, CHD4 and CHD5. The exact stoichiometry of the NuRD complex is unknown, and some subunits such as MBD2 and MBD3, GATAD2A and GATAD2B, and CHD3, CHD4 and CHD5 define mutually exclusive NuRD complexes. Interacts with HDAC2. Methylated at Gln-1390 by N6AMT1. In terms of tissue distribution, preferentially expressed in total brain, fetal brain, and cerebellum. It is also moderately expressed in the adrenal gland and detected in testis.

It is found in the nucleus. The protein localises to the chromosome. It catalyses the reaction ATP + H2O = ADP + phosphate + H(+). Functionally, ATP-dependent chromatin-remodeling factor that binds DNA through histones and regulates gene transcription. May specifically recognize and bind trimethylated 'Lys-27' (H3K27me3) and non-methylated 'Lys-4' of histone H3. Acts as a component of the histone deacetylase NuRD complex which participates in the remodeling of chromatin. Plays a role in the development of the nervous system by activating the expression of genes promoting neuron terminal differentiation. In parallel, it may also positively regulate the trimethylation of histone H3 at 'Lys-27' thereby specifically repressing genes that promote the differentiation into non-neuronal cell lineages. Regulates the expression of genes involved in cell proliferation and differentiation. Downstream activated genes may include CDKN2A that positively regulates the p53/TP53 pathway, which in turn, prevents cell proliferation. In spermatogenesis, it probably regulates histone hyperacetylation and the replacement of histones by transition proteins in chromatin, a crucial step in the condensation of spermatid chromatin and the production of functional spermatozoa. This Homo sapiens (Human) protein is Chromodomain-helicase-DNA-binding protein 5.